Consider the following 99-residue polypeptide: Nucleoid-associated protein SSA_0326 (99 aa).

Residues 1-15 (MMNMQSMMKQAQKLQ) are compositionally biased toward low complexity. Positions 1–23 (MMNMQSMMKQAQKLQKQMEKGQA) are disordered.

It belongs to the YbaB/EbfC family. Homodimer.

The protein resides in the cytoplasm. It localises to the nucleoid. Functionally, binds to DNA and alters its conformation. May be involved in regulation of gene expression, nucleoid organization and DNA protection. The sequence is that of Nucleoid-associated protein SSA_0326 from Streptococcus sanguinis (strain SK36).